A 285-amino-acid chain; its full sequence is Involucrin (285 aa).

Disordered regions lie at residues 1–93 (MSQQ…QEQK), 120–256 (LEQQ…AQVQ), and 266–285 (LPLI…PEHQ). Over residues 27 to 39 (IDTQQEQVKQPTS) the composition is skewed to polar residues. Low complexity-rich tracts occupy residues 72 to 87 (EQQC…QKQQ), 120 to 129 (LEQQQEQQES), and 137 to 147 (EQCLEQQQEQQ). 3 stretches are compositionally biased toward basic and acidic residues: residues 149 to 165 (SQEK…KEEL), 175 to 185 (EQCEKHQEAKN), and 200 to 233 (QQKE…KEEQ). The segment covering 235-248 (LEQQGQQEGQLEQP) has biased composition (low complexity). A compositionally biased stretch (basic and acidic residues) spans 272 to 285 (QHQKQEVHDPPEHQ).

The protein belongs to the involucrin family. In terms of assembly, directly or indirectly cross-linked to cornifelin (CNFN). Substrate of transglutaminase. Specific glutamines or lysines are cross-linked to keratins, desmoplakin and to inter involucrin molecules. Keratinocytes of epidermis and other stratified squamous epithelia.

The protein localises to the cytoplasm. In terms of biological role, part of the insoluble cornified cell envelope (CE) of stratified squamous epithelia. The sequence is that of Involucrin (IVL) from Canis lupus familiaris (Dog).